Reading from the N-terminus, the 433-residue chain is Keratin, type I cytoskeletal 17 (433 aa).

Positions 1-24 are disordered; it reads MTTTIRQFTSSSSIKGSSGLGGGS. The head stretch occupies residues 1–83; it reads MTTTIRQFTS…GGVDGLLAGG (83 aa). 2 positions are modified to phosphoserine: Ser12 and Ser13. Lys15 participates in a covalent cross-link: Glycyl lysine isopeptide (Lys-Gly) (interchain with G-Cter in SUMO1); alternate. Lys15 participates in a covalent cross-link: Glycyl lysine isopeptide (Lys-Gly) (interchain with G-Cter in SUMO2); alternate. 4 positions are modified to phosphoserine: Ser25, Ser32, Ser34, and Ser39. Phosphoserine; by RPS6KA1 is present on Ser44. Residues 84 to 120 are coil 1A; sequence EKATMQNLNDRLASYLDKVRALEEANTELEVKIRDWY. An IF rod domain is found at 84-395; that stretch reads EKATMQNLND…RLLEGEDAHL (312 aa). Thr110 is subject to Phosphothreonine. Residues 121–138 are linker 1; it reads QKQAPGPARDYSAYYHTI. Residues 139 to 230 are coil 1B; that stretch reads EDLKNKILVA…NHEEEMNALR (92 aa). Residues 231 to 250 form a linker 12 region; sequence GQVGGEINVEMDAAPGVDLS. Positions 251 to 392 are coil 2; that stretch reads RILSEMRDQY…TYRRLLEGED (142 aa). A Glycyl lysine isopeptide (Lys-Gly) (interchain with G-Cter in SUMO2) cross-link involves residue Lys278. At Thr279 the chain carries Phosphothreonine. Ser323 bears the Phosphoserine mark. Residues 393-433 are tail; that stretch reads AHLTQYKPKEPVTTRQVRTIVEEVQDGKVISSREQVHQTTR. Residues Lys399, Lys401, and Lys420 each participate in a glycyl lysine isopeptide (Lys-Gly) (interchain with G-Cter in SUMO1); alternate cross-link. Residues Lys399, Lys401, and Lys420 each participate in a glycyl lysine isopeptide (Lys-Gly) (interchain with G-Cter in SUMO2); alternate cross-link.

Belongs to the intermediate filament family. Heterodimer of a type I and a type II keratin. KRT17 associates with KRT6 isomers (KRT6A or KRT6B). Interacts with TRADD and SFN. Post-translationally, phosphorylation at Ser-44 occurs in a growth- and stress-dependent fashion in skin keratinocytes, it has no effect on filament organization. As to expression, expressed strongly in outer root sheath and medulla region of hair follicle and in the early differentiating epithelial cells (trichocytes) within the hair bulb region. Weak expression in the matrix cells of hair bulb. Also present in the sweat gland within the skin, vibrissae follicle, salivary gland, tooth and thymus.

It localises to the cytoplasm. Its function is as follows. Type I keratin involved in the formation and maintenance of various skin appendages, specifically in determining shape and orientation of hair. Required for the correct growth of hair follicles, in particular for the persistence of the anagen (growth) state. Modulates the function of TNF-alpha in the specific context of hair cycling. Regulates protein synthesis and epithelial cell growth through binding to the adapter protein SFN and by stimulating Akt/mTOR pathway. Involved in tissue repair. May be a marker of basal cell differentiation in complex epithelia and therefore indicative of a certain type of epithelial 'stem cells'. Acts as a promoter of epithelial proliferation by acting a regulator of immune response in skin: promotes Th1/Th17-dominated immune environment contributing to the development of basaloid skin tumors. May act as an autoantigen in the immunopathogenesis of psoriasis, with certain peptide regions being a major target for autoreactive T-cells and hence causing their proliferation. In Mus musculus (Mouse), this protein is Keratin, type I cytoskeletal 17 (Krt17).